A 419-amino-acid chain; its full sequence is Serine hydroxymethyltransferase 1 (419 aa).

(6S)-5,6,7,8-tetrahydrofolate is bound by residues Leu-121 and 125 to 127 (GHL). N6-(pyridoxal phosphate)lysine is present on Lys-230. (6S)-5,6,7,8-tetrahydrofolate is bound at residue 356-358 (SPF).

This sequence belongs to the SHMT family. As to quaternary structure, homodimer. The cofactor is pyridoxal 5'-phosphate.

Its subcellular location is the cytoplasm. The catalysed reaction is (6R)-5,10-methylene-5,6,7,8-tetrahydrofolate + glycine + H2O = (6S)-5,6,7,8-tetrahydrofolate + L-serine. It participates in one-carbon metabolism; tetrahydrofolate interconversion. It functions in the pathway amino-acid biosynthesis; glycine biosynthesis; glycine from L-serine: step 1/1. Its function is as follows. Catalyzes the reversible interconversion of serine and glycine with tetrahydrofolate (THF) serving as the one-carbon carrier. This reaction serves as the major source of one-carbon groups required for the biosynthesis of purines, thymidylate, methionine, and other important biomolecules. Also exhibits THF-independent aldolase activity toward beta-hydroxyamino acids, producing glycine and aldehydes, via a retro-aldol mechanism. The chain is Serine hydroxymethyltransferase 1 from Colwellia psychrerythraea (strain 34H / ATCC BAA-681) (Vibrio psychroerythus).